A 1068-amino-acid polypeptide reads, in one-letter code: Cytospin-B (1068 aa).

The interval 1–221 (MRSAAKPWNP…VDGTSVSPGD (221 aa)) is disordered. Residue arginine 2 is the site of N-myristoyl glycine attachment. Residues 29–40 (SSGMKSSKSSTS) show a composition bias toward low complexity. Phosphoserine occurs at positions 38 and 55. Threonine 78 carries the post-translational modification Phosphothreonine. Phosphoserine occurs at positions 112, 131, 134, 137, and 138. Over residues 126–144 (SNPRKSVSSPTSSNTPTPT) the composition is skewed to low complexity. Threonine 142 carries the phosphothreonine modification. Positions 154-200 (PKQENEGGEKAALESQVRELLAEAKAKDSEINRLRSELKKYKEKRTL) are enriched in basic and acidic residues. Serine 218 and serine 241 each carry phosphoserine. Polar residues-rich tracts occupy residues 261–295 (PNSE…QMSS), 309–323 (LRTS…TKAS), and 337–367 (ETPS…SVSE). Residues 261–367 (PNSEGAASHT…AGSSPNSVSE (107 aa)) are disordered. Phosphoserine is present on residues serine 361, serine 366, serine 369, and serine 425. Residues 579-773 (EVQEMLKVAR…QKELGDVQGH (195 aa)) are a coiled coil. A disordered region spans residues 777-796 (VTSRAAPPPVDEEPESSEVD). Phosphoserine occurs at positions 847 and 863. Disordered regions lie at residues 859 to 885 (AAAV…TQRL) and 898 to 922 (GRTE…SRPP). Residues 866–875 (QRHSTYSSVR) are compositionally biased toward polar residues. Residues 898–909 (GRTETLKPDPHL) are compositionally biased toward basic and acidic residues. Residues serine 912 and serine 914 each carry the phosphoserine modification. A compositionally biased stretch (low complexity) spans 912-922 (SPSLESLSRPP). In terms of domain architecture, Calponin-homology (CH) spans 962-1067 (GSKRNALLKW…YVAQIYKYFE (106 aa)).

The protein belongs to the cytospin-A family. As to expression, highly expressed in testis. Barely detectable in other tissues. Also highly expressed in some cancer cell lines.

The protein resides in the nucleus. It localises to the membrane. This Homo sapiens (Human) protein is Cytospin-B (SPECC1).